Here is a 228-residue protein sequence, read N- to C-terminus: 7-cyano-7-deazaguanine synthase (228 aa).

9–19 (LSGGPDSTTVL) is a binding site for ATP. Residues Cys193, Cys203, Cys206, and Cys209 each coordinate Zn(2+).

Belongs to the QueC family. It depends on Zn(2+) as a cofactor.

The catalysed reaction is 7-carboxy-7-deazaguanine + NH4(+) + ATP = 7-cyano-7-deazaguanine + ADP + phosphate + H2O + H(+). It participates in purine metabolism; 7-cyano-7-deazaguanine biosynthesis. Functionally, catalyzes the ATP-dependent conversion of 7-carboxy-7-deazaguanine (CDG) to 7-cyano-7-deazaguanine (preQ(0)). The sequence is that of 7-cyano-7-deazaguanine synthase from Rickettsia africae (strain ESF-5).